Consider the following 153-residue polypeptide: Aspartate carbamoyltransferase regulatory chain (153 aa).

Positions 109, 114, 138, and 141 each coordinate Zn(2+).

The protein belongs to the PyrI family. In terms of assembly, contains catalytic and regulatory chains. Zn(2+) is required as a cofactor.

Functionally, involved in allosteric regulation of aspartate carbamoyltransferase. The polypeptide is Aspartate carbamoyltransferase regulatory chain (Salmonella arizonae (strain ATCC BAA-731 / CDC346-86 / RSK2980)).